The chain runs to 104 residues: Large ribosomal subunit protein uL24 (104 aa).

This sequence belongs to the universal ribosomal protein uL24 family. Part of the 50S ribosomal subunit.

Functionally, one of two assembly initiator proteins, it binds directly to the 5'-end of the 23S rRNA, where it nucleates assembly of the 50S subunit. Its function is as follows. One of the proteins that surrounds the polypeptide exit tunnel on the outside of the subunit. This chain is Large ribosomal subunit protein uL24, found in Anaplasma phagocytophilum (strain HZ).